The primary structure comprises 552 residues: Membrane protein insertase YidC (552 aa).

A helical transmembrane segment spans residues 3–23 (IKRTVLWVIFFMSAVMLFDNW). The disordered stretch occupies residues 35-59 (PSATPTKTVGSAAPGTTTPGTQPAD). The span at 42–59 (TVGSAAPGTTTPGTQPAD) shows a compositional bias: low complexity. The next 3 helical transmembrane spans lie at 364 to 384 (WGWSIVLLTLLIKAVFFPLSA), 430 to 450 (FGGCLPVVIQIPVFISLYWVL), and 504 to 524 (MMFMPIAFSVMFFFFPAGLVL).

Belongs to the OXA1/ALB3/YidC family. Type 1 subfamily. Interacts with the Sec translocase complex via SecD. Specifically interacts with transmembrane segments of nascent integral membrane proteins during membrane integration.

It is found in the cell inner membrane. Required for the insertion and/or proper folding and/or complex formation of integral membrane proteins into the membrane. Involved in integration of membrane proteins that insert both dependently and independently of the Sec translocase complex, as well as at least some lipoproteins. Aids folding of multispanning membrane proteins. This Paraburkholderia phytofirmans (strain DSM 17436 / LMG 22146 / PsJN) (Burkholderia phytofirmans) protein is Membrane protein insertase YidC.